The chain runs to 98 residues: PqqA binding protein (98 aa).

It belongs to the PqqD family. Monomer. Interacts with PqqE.

It functions in the pathway cofactor biosynthesis; pyrroloquinoline quinone biosynthesis. Functions as a PqqA binding protein and presents PqqA to PqqE, in the pyrroloquinoline quinone (PQQ) biosynthetic pathway. The protein is PqqA binding protein of Rhizobium meliloti (strain 1021) (Ensifer meliloti).